The following is a 396-amino-acid chain: 1-deoxy-D-xylulose 5-phosphate reductoisomerase (396 aa).

The NADPH site is built by T17, G18, S19, I20, N47, and N130. A 1-deoxy-D-xylulose 5-phosphate-binding site is contributed by K131. Position 132 (E132) interacts with NADPH. Residue D156 participates in Mn(2+) binding. Residues S157, E158, S182, and H205 each coordinate 1-deoxy-D-xylulose 5-phosphate. A Mn(2+)-binding site is contributed by E158. NADPH is bound at residue G211. The 1-deoxy-D-xylulose 5-phosphate site is built by S218, N223, K224, and E227. Residue E227 coordinates Mn(2+).

It belongs to the DXR family. It depends on Mg(2+) as a cofactor. Mn(2+) serves as cofactor.

The enzyme catalyses 2-C-methyl-D-erythritol 4-phosphate + NADP(+) = 1-deoxy-D-xylulose 5-phosphate + NADPH + H(+). It participates in isoprenoid biosynthesis; isopentenyl diphosphate biosynthesis via DXP pathway; isopentenyl diphosphate from 1-deoxy-D-xylulose 5-phosphate: step 1/6. Functionally, catalyzes the NADPH-dependent rearrangement and reduction of 1-deoxy-D-xylulose-5-phosphate (DXP) to 2-C-methyl-D-erythritol 4-phosphate (MEP). The polypeptide is 1-deoxy-D-xylulose 5-phosphate reductoisomerase (Rhizobium etli (strain CIAT 652)).